Reading from the N-terminus, the 229-residue chain is uncharacterized protein (229 aa).

The next 7 membrane-spanning stretches (helical) occupy residues 21–41, 56–76, 83–103, 109–129, 141–161, 162–182, and 202–222; these read IYSL…LMLY, MIYY…SSAA, ALPI…FIIV, TVFQ…IIGV, AMFA…FIGS, GMMS…LIAS, and WAVA…ISLL.

The protein belongs to the BI1 family.

It is found in the cell membrane. This is an uncharacterized protein from Streptococcus pyogenes serotype M1.